The sequence spans 630 residues: Betaine/ectoine transporter LcoP (630 aa).

Positions M1–Q13 are enriched in polar residues. The interval M1 to G28 is disordered. The segment covering E17–H26 has biased composition (basic and acidic residues). The next 12 membrane-spanning stretches (helical) occupy residues T47–P67, T85–F105, F125–P145, F177–S197, M230–V250, I267–V287, I299–L319, W354–A374, F385–G405, L436–T456, L479–G499, and L510–I530. The interval W611–D630 is disordered.

Belongs to the BCCT transporter (TC 2.A.15) family.

Its subcellular location is the cell membrane. Its activity is regulated as follows. Uptake is activated by hyperosmotic stress. Shows a small but significant chill stimulation around 15 degrees Celsius. Functionally, involved in the uptake of osmoprotectants. Can transport betaine and ectoine. Na(+) is probably the coupling ion. The chain is Betaine/ectoine transporter LcoP from Corynebacterium glutamicum (strain ATCC 13032 / DSM 20300 / JCM 1318 / BCRC 11384 / CCUG 27702 / LMG 3730 / NBRC 12168 / NCIMB 10025 / NRRL B-2784 / 534).